A 158-amino-acid chain; its full sequence is Crossover junction endodeoxyribonuclease RuvC (158 aa).

Active-site residues include Asp7, Glu66, and Asp139. Mg(2+) is bound by residues Asp7, Glu66, and Asp139.

It belongs to the RuvC family. In terms of assembly, homodimer which binds Holliday junction (HJ) DNA. The HJ becomes 2-fold symmetrical on binding to RuvC with unstacked arms; it has a different conformation from HJ DNA in complex with RuvA. In the full resolvosome a probable DNA-RuvA(4)-RuvB(12)-RuvC(2) complex forms which resolves the HJ. Mg(2+) serves as cofactor.

Its subcellular location is the cytoplasm. It carries out the reaction Endonucleolytic cleavage at a junction such as a reciprocal single-stranded crossover between two homologous DNA duplexes (Holliday junction).. Functionally, the RuvA-RuvB-RuvC complex processes Holliday junction (HJ) DNA during genetic recombination and DNA repair. Endonuclease that resolves HJ intermediates. Cleaves cruciform DNA by making single-stranded nicks across the HJ at symmetrical positions within the homologous arms, yielding a 5'-phosphate and a 3'-hydroxyl group; requires a central core of homology in the junction. The consensus cleavage sequence is 5'-(A/T)TT(C/G)-3'. Cleavage occurs on the 3'-side of the TT dinucleotide at the point of strand exchange. HJ branch migration catalyzed by RuvA-RuvB allows RuvC to scan DNA until it finds its consensus sequence, where it cleaves and resolves the cruciform DNA. The polypeptide is Crossover junction endodeoxyribonuclease RuvC (Carboxydothermus hydrogenoformans (strain ATCC BAA-161 / DSM 6008 / Z-2901)).